A 302-amino-acid polypeptide reads, in one-letter code: Acetyl-coenzyme A carboxylase carboxyl transferase subunit beta (302 aa).

Residues 25–294 (VWTKCDSCGQ…PHFDEAAPVS (270 aa)) enclose the CoA carboxyltransferase N-terminal domain. Zn(2+) contacts are provided by Cys29, Cys32, Cys48, and Cys51. The C4-type zinc finger occupies 29–51 (CDSCGQVLYRAELERNLEVCPKC). The tract at residues 281-302 (NQPQPHFDEAAPVSEQENQADA) is disordered.

The protein belongs to the AccD/PCCB family. In terms of assembly, acetyl-CoA carboxylase is a heterohexamer composed of biotin carboxyl carrier protein (AccB), biotin carboxylase (AccC) and two subunits each of ACCase subunit alpha (AccA) and ACCase subunit beta (AccD). Requires Zn(2+) as cofactor.

The protein resides in the cytoplasm. The enzyme catalyses N(6)-carboxybiotinyl-L-lysyl-[protein] + acetyl-CoA = N(6)-biotinyl-L-lysyl-[protein] + malonyl-CoA. Its pathway is lipid metabolism; malonyl-CoA biosynthesis; malonyl-CoA from acetyl-CoA: step 1/1. In terms of biological role, component of the acetyl coenzyme A carboxylase (ACC) complex. Biotin carboxylase (BC) catalyzes the carboxylation of biotin on its carrier protein (BCCP) and then the CO(2) group is transferred by the transcarboxylase to acetyl-CoA to form malonyl-CoA. In Serratia proteamaculans (strain 568), this protein is Acetyl-coenzyme A carboxylase carboxyl transferase subunit beta.